We begin with the raw amino-acid sequence, 426 residues long: 3-phosphoshikimate 1-carboxyvinyltransferase (426 aa).

3-phosphoshikimate contacts are provided by lysine 22, serine 23, and arginine 27. Position 22 (lysine 22) interacts with phosphoenolpyruvate. Glycine 96 and arginine 124 together coordinate phosphoenolpyruvate. The 3-phosphoshikimate site is built by serine 170, serine 171, glutamine 172, serine 198, aspartate 314, asparagine 337, and lysine 341. Glutamine 172 lines the phosphoenolpyruvate pocket. Aspartate 314 functions as the Proton acceptor in the catalytic mechanism. Phosphoenolpyruvate-binding residues include arginine 345, arginine 387, and lysine 412.

This sequence belongs to the EPSP synthase family. In terms of assembly, monomer.

It is found in the cytoplasm. The catalysed reaction is 3-phosphoshikimate + phosphoenolpyruvate = 5-O-(1-carboxyvinyl)-3-phosphoshikimate + phosphate. It participates in metabolic intermediate biosynthesis; chorismate biosynthesis; chorismate from D-erythrose 4-phosphate and phosphoenolpyruvate: step 6/7. Catalyzes the transfer of the enolpyruvyl moiety of phosphoenolpyruvate (PEP) to the 5-hydroxyl of shikimate-3-phosphate (S3P) to produce enolpyruvyl shikimate-3-phosphate and inorganic phosphate. The sequence is that of 3-phosphoshikimate 1-carboxyvinyltransferase from Aliivibrio fischeri (strain ATCC 700601 / ES114) (Vibrio fischeri).